The chain runs to 370 residues: GTPase Obg (370 aa).

An Obg domain is found at 1-159 (MKFIDEARIE…RMLRLELKVL (159 aa)). The interval 127 to 146 (NLHFKSSTNRAPRQKTDGKP) is disordered. Residues 160 to 334 (ADVGLLGMPN…LCYAIYDYLA (175 aa)) form the OBG-type G domain. GTP-binding positions include 166–173 (GMPNAGKS), 191–195 (FTTLA), 213–216 (DIPG), 284–287 (NKLD), and 315–317 (SAL). Positions 173 and 193 each coordinate Mg(2+). Positions 350–370 (ADVRFRDAPPSDGGATSGGDA) are disordered.

The protein belongs to the TRAFAC class OBG-HflX-like GTPase superfamily. OBG GTPase family. In terms of assembly, monomer. It depends on Mg(2+) as a cofactor.

It is found in the cytoplasm. Its function is as follows. An essential GTPase which binds GTP, GDP and possibly (p)ppGpp with moderate affinity, with high nucleotide exchange rates and a fairly low GTP hydrolysis rate. Plays a role in control of the cell cycle, stress response, ribosome biogenesis and in those bacteria that undergo differentiation, in morphogenesis control. This Burkholderia vietnamiensis (strain G4 / LMG 22486) (Burkholderia cepacia (strain R1808)) protein is GTPase Obg.